A 209-amino-acid chain; its full sequence is Bcl-2 homologous antagonist/killer (209 aa).

Positions 1–28 (MASGQGPGPPKVGCDESPSPSEQQVAQD) are disordered. Ala2 carries the N-acetylalanine modification. The segment covering 18–27 (PSPSEQQVAQ) has biased composition (polar residues). The BH3 motif lies at 72–86 (VGRQLALIGDDINRR). Positions 115 to 134 (SLFKSGISWGRVVALLGFGY) match the BH1 motif. Asp158 and His162 together coordinate Zn(2+). Positions 167 to 182 (RWIAQRGGWVAALNFR) match the BH2 motif. The helical transmembrane segment at 186–203 (ILTVMVIFGVVLLGQFVV) threads the bilayer.

It belongs to the Bcl-2 family. As to quaternary structure, homodimer. Formation of the homodimer is zinc-dependent. Forms heterodimers with BCL2 and BCL2L1 isoform Bcl-X(L). Forms heterooligomers with BAX. Interacts with BCL2A1. Interacts withRTL10/BOP. Interacts with VDAC1. Interacts with GIMAP3/IAN4 and GIMAP5/IAN5. (Microbial infection) Interacts with gamma-herpesvirus 68 protein vBCL2. As to expression, widely expressed.

The protein localises to the mitochondrion outer membrane. In the presence of an appropriate stimulus, accelerates programmed cell death by binding to, and antagonizing the anti-apoptotic action of BCL2. The chain is Bcl-2 homologous antagonist/killer (Bak1) from Mus musculus (Mouse).